We begin with the raw amino-acid sequence, 247 residues long: Phycocyanobilin:ferredoxin oxidoreductase (247 aa).

It belongs to the HY2 family.

It carries out the reaction (2R,3Z)-phycocyanobilin + 4 oxidized [2Fe-2S]-[ferredoxin] = biliverdin IXalpha + 4 reduced [2Fe-2S]-[ferredoxin] + 4 H(+). Functionally, catalyzes the four-electron reduction of biliverdin IX-alpha (2-electron reduction at both the A and D rings); the reaction proceeds via an isolatable 2-electron intermediate, 181,182-dihydrobiliverdin. The protein is Phycocyanobilin:ferredoxin oxidoreductase of Synechococcus sp. (strain CC9605).